A 334-amino-acid chain; its full sequence is Glycerol-3-phosphate dehydrogenase [NAD(P)+] (334 aa).

Residues Trp-13, Arg-33, and Lys-106 each coordinate NADPH. Sn-glycerol 3-phosphate contacts are provided by Lys-106, Gly-137, and Ser-139. Ala-141 provides a ligand contact to NADPH. Sn-glycerol 3-phosphate contacts are provided by Lys-192, Asp-245, Ser-255, Arg-256, and Asn-257. The Proton acceptor role is filled by Lys-192. Residue Arg-256 coordinates NADPH. Residues Val-280 and Glu-282 each coordinate NADPH.

Belongs to the NAD-dependent glycerol-3-phosphate dehydrogenase family.

It localises to the cytoplasm. It catalyses the reaction sn-glycerol 3-phosphate + NAD(+) = dihydroxyacetone phosphate + NADH + H(+). The catalysed reaction is sn-glycerol 3-phosphate + NADP(+) = dihydroxyacetone phosphate + NADPH + H(+). It participates in membrane lipid metabolism; glycerophospholipid metabolism. Its function is as follows. Catalyzes the reduction of the glycolytic intermediate dihydroxyacetone phosphate (DHAP) to sn-glycerol 3-phosphate (G3P), the key precursor for phospholipid synthesis. The protein is Glycerol-3-phosphate dehydrogenase [NAD(P)+] of Chlamydia trachomatis serovar L2 (strain ATCC VR-902B / DSM 19102 / 434/Bu).